The following is an 83-amino-acid chain: Large ribosomal subunit protein eL14 (83 aa).

This sequence belongs to the eukaryotic ribosomal protein eL14 family.

In Thermococcus gammatolerans (strain DSM 15229 / JCM 11827 / EJ3), this protein is Large ribosomal subunit protein eL14.